The following is a 100-amino-acid chain: Urease subunit gamma (100 aa).

The protein belongs to the urease gamma subunit family. In terms of assembly, heterotrimer of UreA (gamma), UreB (beta) and UreC (alpha) subunits. Three heterotrimers associate to form the active enzyme.

The protein resides in the cytoplasm. It catalyses the reaction urea + 2 H2O + H(+) = hydrogencarbonate + 2 NH4(+). Its pathway is nitrogen metabolism; urea degradation; CO(2) and NH(3) from urea (urease route): step 1/1. In Burkholderia multivorans (strain ATCC 17616 / 249), this protein is Urease subunit gamma.